The sequence spans 346 residues: fMet-Leu-Phe receptor (346 aa).

Residues Asn-1 and Asn-7 are each glycosylated (N-linked (GlcNAc...) asparagine). Over 1–24 the chain is Extracellular; it reads NSSLPTNISGGTPAVSAGYLFLDI. Residues 25 to 47 traverse the membrane as a helical segment; it reads ITYLVYAVTFVLGVLGNGLVIWV. Residues 48 to 58 are Cytoplasmic-facing; sequence AGFRMTHTVTT. The helical transmembrane segment at 59-80 threads the bilayer; sequence ISYLNLAVADFCFTSTLPFFMV. Topologically, residues 81 to 97 are extracellular; it reads RKAMGGHWPFGWFLCKF. Cys-95 and Cys-173 are disulfide-bonded. The helical transmembrane segment at 98–118 threads the bilayer; that stretch reads IFTIVDINLFGSVFLIALIAL. At 119 to 137 the chain is on the cytoplasmic side; sequence DRCVCVLHPVWTQNHRTVS. A helical transmembrane segment spans residues 138 to 159; sequence LAKKVIIGPWVMALLLTLPVII. At 160-202 the chain is on the extracellular side; sequence RVTTVPGKMGTVSCTFNFSPWTNDPKERIKVAIAMLTVRGIIR. A helical transmembrane segment spans residues 203–223; it reads FIIGFSAPMSIVAVSYGLIAT. Topologically, residues 224-239 are cytoplasmic; sequence KIHKQGLIKSSRPLRV. Residues 240 to 263 form a helical membrane-spanning segment; the sequence is LSFVAAAFFLCWSPYQVVAFIATV. The Extracellular portion of the chain corresponds to 264-282; the sequence is RIRELLQGMYKEISIAVDV. Residues 283–302 form a helical membrane-spanning segment; that stretch reads TSALAFFNSCLNPMLYVFMG. The Cytoplasmic portion of the chain corresponds to 303-346; the sequence is QDFRERLIHSLPASLERALTEASTQTSDTATNSTLPSAEVALQA. The span at 324-338 shows a compositional bias: polar residues; the sequence is ASTQTSDTATNSTLP. Residues 324-346 form a disordered region; it reads ASTQTSDTATNSTLPSAEVALQA.

It belongs to the G-protein coupled receptor 1 family. In terms of processing, phosphorylated; which is necessary for desensitization.

The protein resides in the cell membrane. High affinity receptor for N-formyl-methionyl peptides (fMLP), which are powerful neutrophil chemotactic factors. Binding of fMLP to the receptor stimulates intracellular calcium mobilization and superoxide anion release. This response is mediated via a G-protein that activates a phosphatidylinositol-calcium second messenger system. Receptor for TAFA4, mediates its effects on chemoattracting macrophages, promoting phagocytosis and increasing ROS release. Receptor for cathepsin CTSG, leading to increased phagocyte chemotaxis. The sequence is that of fMet-Leu-Phe receptor (FPR1) from Pongo pygmaeus (Bornean orangutan).